Reading from the N-terminus, the 498-residue chain is WD repeat-containing protein 55 homolog (498 aa).

The tract at residues 1 to 131 (MHTHNNFKTP…ATFDLDEDDE (131 aa)) is disordered. Composition is skewed to acidic residues over residues 12–23 (DEDELDDLDEDM) and 31–48 (IEQE…EYDL). Composition is skewed to low complexity over residues 67–82 (NDSS…NAAD) and 93–103 (AGGVTAGGATS). WD repeat units lie at residues 154-193 (KLED…NKLL), 198-237 (VHSK…LKKL), 241-279 (AHDD…AIFE), 282-321 (ELED…MYVQ), 324-363 (PYEE…YHCD), and 408-447 (QHNM…DFGD). The interval 478–498 (DLTKENADGDDDPGAGPSNMA) is disordered.

The protein belongs to the WD repeat WDR55 family.

The protein is WD repeat-containing protein 55 homolog of Drosophila melanogaster (Fruit fly).